The chain runs to 498 residues: Zinc finger protein 395 (498 aa).

Residues 129–165 are disordered; sequence QKPLSSPIEQSLPTSPGATSTSAQRSVSRSIDVPKRR. A compositionally biased stretch (polar residues) spans 130–157; it reads KPLSSPIEQSLPTSPGATSTSAQRSVSR. The Nuclear export signal signature appears at 171–180; that stretch reads MDEMMAAMVL. Residues 209–245 are disordered; the sequence is KEGGDVSDSGSSTTSGHWSASSGVSTPSPPHTDASPK. A compositionally biased stretch (low complexity) spans 214–231; sequence VSDSGSSTTSGHWSASSG. The C2H2-type zinc-finger motif lies at 285-310; the sequence is YKCLWPNCGKLLRSIVGIKRHVKTQH.

The protein localises to the cytoplasm. It is found in the nucleus. The chain is Zinc finger protein 395 (znf395) from Xenopus laevis (African clawed frog).